The primary structure comprises 1596 residues: Cellulose synthase 2 (1596 aa).

Residues 1–749 (MIYRAILKRL…RSARHGATAS (749 aa)) are catalytic. Transmembrane regions (helical) follow at residues 25 to 45 (SPFV…GVTI) and 106 to 126 (LSLL…LSYF). The segment at 145-238 (DWPVVDVYVP…YVVIFDCDHI (94 aa)) is catalytic subdomain A. The active site involves Asp-187. The substrate site is built by Asp-234 and Asp-236. The segment at 315-375 (SAVLGIGGFA…GQRVRWARGM (61 aa)) is catalytic subdomain B. Residue Asp-331 is part of the active site. 4 helical membrane passes run 396–416 (LCYL…VFLA), 421–441 (FLFL…VYAF), 505–525 (FDLN…LALV), and 544–564 (FALN…SIAV). A PilZ domain is found at 570-669 (QIRHKPRVRA…ERQIVEFMFG (100 aa)). A cyclic di-GMP binding domain region spans residues 750-1596 (LIVLLGLPAA…RVKDTTDASH (847 aa)). Disordered stretches follow at residues 769–812 (SRAT…IAPA) and 828–868 (TGPA…APPI). Residues 783–809 (VEPPPVNAPPPPSLPQPPGTLPTPPQI) are compositionally biased toward pro residues. Residues 1553–1573 (LTLYVLGLVGAGLVAAAAVRL) traverse the membrane as a helical segment.

It in the N-terminal section; belongs to the glycosyltransferase 2 family. This sequence in the C-terminal section; belongs to the AcsB/BcsB family.

It is found in the cell inner membrane. The enzyme catalyses [(1-&gt;4)-beta-D-glucosyl](n) + UDP-alpha-D-glucose = [(1-&gt;4)-beta-D-glucosyl](n+1) + UDP + H(+). In Novacetimonas hansenii (Komagataeibacter hansenii), this protein is Cellulose synthase 2 (acsAII).